The sequence spans 113 residues: T cell receptor alpha variable 12-2 (113 aa).

A signal peptide spans 1–20 (MKSLRVLLVILWLQLSWVWS). The 91-residue stretch at 23–113 (KEVEQNSGPL…DSATYLCAVN (91 aa)) folds into the Ig-like domain. Asparagine 43 carries an N-linked (GlcNAc...) asparagine glycan. An intrachain disulfide couples cysteine 44 to cysteine 110.

In terms of assembly, alpha-beta TR is a heterodimer composed of an alpha and beta chain; disulfide-linked. The alpha-beta TR is associated with the transmembrane signaling CD3 coreceptor proteins to form the TR-CD3 (TcR or TCR). The assembly of alpha-beta TR heterodimers with CD3 occurs in the endoplasmic reticulum where a single alpha-beta TR heterodimer associates with one CD3D-CD3E heterodimer, one CD3G-CD3E heterodimer and one CD247 homodimer forming a stable octameric structure. CD3D-CD3E and CD3G-CD3E heterodimers preferentially associate with TR alpha and TR beta chains, respectively. The association of the CD247 homodimer is the last step of TcR assembly in the endoplasmic reticulum and is required for transport to the cell surface.

Its subcellular location is the cell membrane. Its function is as follows. V region of the variable domain of T cell receptor (TR) alpha chain that participates in the antigen recognition. Alpha-beta T cell receptors are antigen specific receptors which are essential to the immune response and are present on the cell surface of T lymphocytes. Recognize peptide-major histocompatibility (MH) (pMH) complexes that are displayed by antigen presenting cells (APC), a prerequisite for efficient T cell adaptive immunity against pathogens. Binding of alpha-beta TR to pMH complex initiates TR-CD3 clustering on the cell surface and intracellular activation of LCK that phosphorylates the ITAM motifs of CD3G, CD3D, CD3E and CD247 enabling the recruitment of ZAP70. In turn ZAP70 phosphorylates LAT, which recruits numerous signaling molecules to form the LAT signalosome. The LAT signalosome propagates signal branching to three major signaling pathways, the calcium, the mitogen-activated protein kinase (MAPK) kinase and the nuclear factor NF-kappa-B (NF-kB) pathways, leading to the mobilization of transcription factors that are critical for gene expression and essential for T cell growth and differentiation. The T cell repertoire is generated in the thymus, by V-(D)-J rearrangement. This repertoire is then shaped by intrathymic selection events to generate a peripheral T cell pool of self-MH restricted, non-autoaggressive T cells. Post-thymic interaction of alpha-beta TR with the pMH complexes shapes TR structural and functional avidity. The sequence is that of T cell receptor alpha variable 12-2 from Homo sapiens (Human).